A 360-amino-acid chain; its full sequence is Protein Wnt-2 (360 aa).

A signal peptide spans 1–25; that stretch reads MNAPLGGIWLWLPLLLTWLTPEVNS. 11 disulfides stabilise this stretch: cysteine 76–cysteine 87, cysteine 127–cysteine 135, cysteine 137–cysteine 157, cysteine 206–cysteine 220, cysteine 208–cysteine 215, cysteine 278–cysteine 309, cysteine 294–cysteine 304, cysteine 308–cysteine 348, cysteine 324–cysteine 339, cysteine 326–cysteine 336, and cysteine 331–cysteine 332. A lipid anchor (O-palmitoleoyl serine; by PORCN) is attached at serine 212. N-linked (GlcNAc...) asparagine glycosylation is present at asparagine 295.

It belongs to the Wnt family. In terms of processing, palmitoleoylation is required for efficient binding to frizzled receptors. Depalmitoleoylation leads to Wnt signaling pathway inhibition.

Its subcellular location is the secreted. It is found in the extracellular space. The protein resides in the extracellular matrix. In terms of biological role, ligand for members of the frizzled family of seven transmembrane receptors. Functions in the canonical Wnt signaling pathway that results in activation of transcription factors of the TCF/LEF family. Functions as a upstream regulator of FGF10 expression. Plays an important role in embryonic lung development. May contribute to embryonic brain development by regulating the proliferation of dopaminergic precursors and neurons. The protein is Protein Wnt-2 (WNT2) of Gorilla gorilla gorilla (Western lowland gorilla).